The primary structure comprises 509 residues: Probable Xaa-Pro aminopeptidase MAC_04092 (509 aa).

Mn(2+)-binding residues include D273, D284, E437, and E478.

This sequence belongs to the peptidase M24B family. The cofactor is Mn(2+).

It carries out the reaction Release of any N-terminal amino acid, including proline, that is linked to proline, even from a dipeptide or tripeptide.. Its function is as follows. Catalyzes the removal of a penultimate prolyl residue from the N-termini of peptides. The protein is Probable Xaa-Pro aminopeptidase MAC_04092 of Metarhizium acridum (strain CQMa 102).